Reading from the N-terminus, the 266-residue chain is Glioma pathogenesis-related protein 1 (266 aa).

An N-terminal signal peptide occupies residues 1–21 (MRVTLATIAWMVSFVSNYSHT). The SCP domain occupies 38 to 175 (VRIHNKFRSE…SNGAHFICNY (138 aa)). The chain crosses the membrane as a helical span at residues 233-255 (YTSLFLIVNSVILILSVIITILV).

This sequence belongs to the CRISP family. According to PubMed:8973356, it is ubiquitously expressed with high levels in lung and kidney and low levels in heart and liver. Highly expressed in cell lines derived from nervous system tumors arising from glia, low or absent in non-glial-derived nervous system tumor cell lines. Also found in fetal kidney. According to PubMed:7607567 it is expressed only in brain tumor glioblastoma multiforme/astrocytoma and not in other nervous system tumors or normal fetal or adult tissues.

The protein localises to the membrane. The sequence is that of Glioma pathogenesis-related protein 1 (GLIPR1) from Homo sapiens (Human).